A 341-amino-acid polypeptide reads, in one-letter code: tRNA N6-adenosine threonylcarbamoyltransferase (341 aa).

Fe cation contacts are provided by H115 and H119. Substrate contacts are provided by residues 138–142 (VVSGG), D171, G184, D188, and N279. A Fe cation-binding site is contributed by D307.

It belongs to the KAE1 / TsaD family. The cofactor is Fe(2+).

It is found in the cytoplasm. It catalyses the reaction L-threonylcarbamoyladenylate + adenosine(37) in tRNA = N(6)-L-threonylcarbamoyladenosine(37) in tRNA + AMP + H(+). Required for the formation of a threonylcarbamoyl group on adenosine at position 37 (t(6)A37) in tRNAs that read codons beginning with adenine. Is involved in the transfer of the threonylcarbamoyl moiety of threonylcarbamoyl-AMP (TC-AMP) to the N6 group of A37, together with TsaE and TsaB. TsaD likely plays a direct catalytic role in this reaction. This Clostridium kluyveri (strain NBRC 12016) protein is tRNA N6-adenosine threonylcarbamoyltransferase.